Here is an 840-residue protein sequence, read N- to C-terminus: Probable alpha-glucuronidase A (840 aa).

An N-terminal signal peptide occupies residues 1-19 (MRSVITTLTLVASVGLAVA). N222, N310, N465, N527, N576, N682, and N732 each carry an N-linked (GlcNAc...) asparagine glycan.

Belongs to the glycosyl hydrolase 67 family.

The protein localises to the secreted. It carries out the reaction an alpha-D-glucuronoside + H2O = D-glucuronate + an alcohol. Its function is as follows. Alpha-glucuronidase involved in the hydrolysis of xylan, a major structural heterogeneous polysaccharide found in plant biomass representing the second most abundant polysaccharide in the biosphere, after cellulose. Releases 4-O-methylglucuronic acid from xylan. This Aspergillus clavatus (strain ATCC 1007 / CBS 513.65 / DSM 816 / NCTC 3887 / NRRL 1 / QM 1276 / 107) protein is Probable alpha-glucuronidase A (aguA).